The primary structure comprises 653 residues: Probable syringafactin export ATP-binding/permease protein SyfD (653 aa).

One can recognise an ABC transporter domain in the interval 6–244; sequence LELNGVTRRF…NEKTTERLPT (239 aa). 42–49 is a binding site for ATP; sequence GASGSGKS. 5 consecutive transmembrane segments (helical) span residues 252-272, 278-298, 526-546, 583-603, and 616-636; these read LMAN…ALIS, LLTM…VAIG, LALL…IGVM, MVCL…GYVF, and LGSI…FGFV.

Belongs to the ABC transporter superfamily. Macrolide exporter (TC 3.A.1.122) family. Probably part of a tripartite efflux system, which is composed of an inner membrane transporter, a periplasmic membrane fusion protein, and an outer membrane component.

It localises to the cell inner membrane. Its function is as follows. Probably involved in the export of syringafactins. The chain is Probable syringafactin export ATP-binding/permease protein SyfD from Pseudomonas syringae pv. syringae (strain B728a).